We begin with the raw amino-acid sequence, 210 residues long: Probable glutathione peroxidase 8 (210 aa).

A helical transmembrane segment spans residues 13-35 (ASRAGLFKVLLSVALCMGSLYLL).

This sequence belongs to the glutathione peroxidase family.

The protein localises to the membrane. It carries out the reaction 2 glutathione + H2O2 = glutathione disulfide + 2 H2O. The chain is Probable glutathione peroxidase 8 (gpx8) from Danio rerio (Zebrafish).